Reading from the N-terminus, the 283-residue chain is NifU-like protein 4, mitochondrial (283 aa).

Residues M1 to L48 constitute a mitochondrion transit peptide.

Belongs to the NifU family. Predominantly expressed in roots.

It localises to the mitochondrion. Functionally, molecular scaffold for [Fe-S] cluster assembly of mitochondrial iron-sulfur proteins. The sequence is that of NifU-like protein 4, mitochondrial (NIFU4) from Arabidopsis thaliana (Mouse-ear cress).